A 488-amino-acid chain; its full sequence is 3-octaprenyl-4-hydroxybenzoate carboxy-lyase (488 aa).

Mn(2+) is bound at residue asparagine 172. Prenylated FMN contacts are provided by residues 175–177, 189–191, and 194–195; these read IYR, RWL, and RG. Residue glutamate 238 coordinates Mn(2+). Aspartate 287 serves as the catalytic Proton donor.

Belongs to the UbiD family. As to quaternary structure, homohexamer. The cofactor is prenylated FMN. Requires Mn(2+) as cofactor.

It localises to the cell membrane. It catalyses the reaction a 4-hydroxy-3-(all-trans-polyprenyl)benzoate + H(+) = a 2-(all-trans-polyprenyl)phenol + CO2. Its pathway is cofactor biosynthesis; ubiquinone biosynthesis. In terms of biological role, catalyzes the decarboxylation of 3-octaprenyl-4-hydroxy benzoate to 2-octaprenylphenol, an intermediate step in ubiquinone biosynthesis. The sequence is that of 3-octaprenyl-4-hydroxybenzoate carboxy-lyase from Alkalilimnicola ehrlichii (strain ATCC BAA-1101 / DSM 17681 / MLHE-1).